The chain runs to 144 residues: Putative pre-16S rRNA nuclease (144 aa).

It belongs to the YqgF nuclease family.

The protein localises to the cytoplasm. Could be a nuclease involved in processing of the 5'-end of pre-16S rRNA. The polypeptide is Putative pre-16S rRNA nuclease (Acaryochloris marina (strain MBIC 11017)).